The chain runs to 167 residues: Menaquinol:cytochrome c reductase iron-sulfur subunit (167 aa).

The Rieske domain maps to Thr-59–Leu-158. Cys-100, His-102, Cys-121, and His-124 together coordinate [2Fe-2S] cluster. Cys-105 and Cys-123 are joined by a disulfide.

The protein belongs to the Rieske iron-sulfur protein family. In terms of assembly, the main subunits of the menaquinol:cytochrome c complex are a Rieske-type iron-sulfur protein (QcrA), a cytochrome b (QcrB) and a cytochrome c (QcrC). [2Fe-2S] cluster is required as a cofactor.

In terms of biological role, component of the menaquinol:cytochrome c reductase complex. The Rieske protein is a high potential 2Fe-2S protein. The chain is Menaquinol:cytochrome c reductase iron-sulfur subunit (qcrA) from Bacillus subtilis (strain 168).